A 103-amino-acid polypeptide reads, in one-letter code: Large ribosomal subunit protein bL21 (103 aa).

The protein belongs to the bacterial ribosomal protein bL21 family. Part of the 50S ribosomal subunit. Contacts protein L20.

In terms of biological role, this protein binds to 23S rRNA in the presence of protein L20. The sequence is that of Large ribosomal subunit protein bL21 from Lactobacillus delbrueckii subsp. bulgaricus (strain ATCC 11842 / DSM 20081 / BCRC 10696 / JCM 1002 / NBRC 13953 / NCIMB 11778 / NCTC 12712 / WDCM 00102 / Lb 14).